Here is a 227-residue protein sequence, read N- to C-terminus: 2,3-bisphosphoglycerate-dependent phosphoglycerate mutase (227 aa).

Substrate is bound by residues 7-14 (RHGQSEWN), 20-21 (TG), arginine 59, 86-89 (ERHY), lysine 97, 113-114 (RR), and 182-183 (GN). Catalysis depends on histidine 8, which acts as the Tele-phosphohistidine intermediate. Glutamate 86 (proton donor/acceptor) is an active-site residue.

It belongs to the phosphoglycerate mutase family. BPG-dependent PGAM subfamily. Homodimer.

It catalyses the reaction (2R)-2-phosphoglycerate = (2R)-3-phosphoglycerate. It participates in carbohydrate degradation; glycolysis; pyruvate from D-glyceraldehyde 3-phosphate: step 3/5. Catalyzes the interconversion of 2-phosphoglycerate and 3-phosphoglycerate. The polypeptide is 2,3-bisphosphoglycerate-dependent phosphoglycerate mutase (Neisseria gonorrhoeae (strain ATCC 700825 / FA 1090)).